We begin with the raw amino-acid sequence, 231 residues long: Orotate phosphoribosyltransferase (231 aa).

Residues Lys27, 79 to 80, Arg106, Lys107, Lys110, His112, and 133 to 141 contribute to the 5-phospho-alpha-D-ribose 1-diphosphate site; these read YK and DDVMTAGTA. Orotate contacts are provided by Thr137 and Arg166.

This sequence belongs to the purine/pyrimidine phosphoribosyltransferase family. PyrE subfamily. As to quaternary structure, homodimer. It depends on Mg(2+) as a cofactor.

It carries out the reaction orotidine 5'-phosphate + diphosphate = orotate + 5-phospho-alpha-D-ribose 1-diphosphate. Its pathway is pyrimidine metabolism; UMP biosynthesis via de novo pathway; UMP from orotate: step 1/2. Its function is as follows. Catalyzes the transfer of a ribosyl phosphate group from 5-phosphoribose 1-diphosphate to orotate, leading to the formation of orotidine monophosphate (OMP). This is Orotate phosphoribosyltransferase from Bifidobacterium adolescentis (strain ATCC 15703 / DSM 20083 / NCTC 11814 / E194a).